The following is a 338-amino-acid chain: Rho GTPase-activating protein gacA (338 aa).

The Rho-GAP domain occupies 149–327 (NTLEHVEDEG…NVLSHKVAVH (179 aa)).

It is found in the cytoplasm. Its function is as follows. Rho GTPase-activating protein involved in the signal transduction pathway. The sequence is that of Rho GTPase-activating protein gacA (gacA) from Dictyostelium discoideum (Social amoeba).